The primary structure comprises 385 residues: tRNA(Met) cytidine acetate ligase (385 aa).

Residues 7 to 20, glycine 101, asparagine 153, and arginine 178 contribute to the ATP site; that span reads VAEY…HEFL.

Belongs to the TmcAL family.

The protein localises to the cytoplasm. The catalysed reaction is cytidine(34) in elongator tRNA(Met) + acetate + ATP = N(4)-acetylcytidine(34) in elongator tRNA(Met) + AMP + diphosphate. Functionally, catalyzes the formation of N(4)-acetylcytidine (ac(4)C) at the wobble position of elongator tRNA(Met), using acetate and ATP as substrates. First activates an acetate ion to form acetyladenylate (Ac-AMP) and then transfers the acetyl group to tRNA to form ac(4)C34. The protein is tRNA(Met) cytidine acetate ligase of Lactobacillus gasseri (strain ATCC 33323 / DSM 20243 / BCRC 14619 / CIP 102991 / JCM 1131 / KCTC 3163 / NCIMB 11718 / NCTC 13722 / AM63).